The following is a 971-amino-acid chain: Sodium/calcium exchanger 1 (971 aa).

Positions 1 to 32 (MLRLSLPPNVSMGFRLVTLVALLFTHVDHITA) are cleaved as a signal peptide. The Extracellular segment spans residues 33 to 71 (DTEAETGGNETTECTGSYYCKKGVILPIWEPQDPSFGDK). Residue Asn-41 is glycosylated (N-linked (GlcNAc...) asparagine). The helical transmembrane segment at 72–92 (IARATVYFVAMVYMFLGVSII) threads the bilayer. Residues 93–133 (ADRFMSSIEVITSQEKEITIKKPNGETTKTTVRIWNETVSN) are Cytoplasmic-facing. A helical membrane pass occupies residues 134-154 (LTLMALGSSAPEILLSVIEVC). The stretch at 138-178 (ALGSSAPEILLSVIEVCGHNFTAGDLGPSTIVGSAAFNMFI) is one Alpha-1 repeat. Residues 155–167 (GHNFTAGDLGPST) lie on the Extracellular side of the membrane. Residue Asn-157 is glycosylated (N-linked (GlcNAc...) asparagine). The helical transmembrane segment at 168–188 (IVGSAAFNMFIIIALCVYVVP) threads the bilayer. The Cytoplasmic portion of the chain corresponds to 189-201 (DGETRKIKHLRVF). A helical transmembrane segment spans residues 202–222 (FVTAAWSIFAYTWLYIILSVS). Topologically, residues 223–228 (SPGVVE) are extracellular. Residues 229–249 (VWEGLLTFFFFPICVVFAWVA) traverse the membrane as a helical segment. Residues 250–798 (DRRLLFYKYV…FVPPTEYWNG (549 aa)) are Cytoplasmic-facing. The interval 251–270 (RRLLFYKYVYKRYRAGKQRG) is putative calmodulin-binding region. Phosphoserine occurs at positions 282 and 389. 2 Calx-beta domains span residues 393–493 (VNMD…VHLS) and 524–624 (ATIT…IEIG). Ca(2+) contacts are provided by Glu-417, Asp-453, Asp-478, Asp-479, Ile-481, Glu-483, Glu-486, Asp-530, Asp-531, Asp-532, Glu-548, Asp-584, Asp-610, Glu-611, Glu-612, and Glu-716. A helical transmembrane segment spans residues 799–819 (WACFIVSILMIGLLTAFIGDL). At 820–822 (ASH) the chain is on the extracellular side. Residues 823–843 (FGCTIGLKDSVTAVVFVALGT) form a helical membrane-spanning segment. An Alpha-2 repeat occupies 840 to 876 (ALGTSVPDTFASKVAATQDQYADASIGNVTGSNAVNV). The Cytoplasmic portion of the chain corresponds to 844–872 (SVPDTFASKVAATQDQYADASIGNVTGSN). A helical transmembrane segment spans residues 873–893 (AVNVFLGIGVAWSIAAIYHAA). The Extracellular portion of the chain corresponds to 894–904 (NGEQFKVSPGT). The chain crosses the membrane as a helical span at residues 905–925 (LAFSVTLFTIFAFINVGVLLY). The Cytoplasmic portion of the chain corresponds to 926–942 (RRRPEIGGELGGPRTAK). Residues 943 to 963 (LLTSSLFVLLWLLYIFFSSLE) traverse the membrane as a helical segment. At 964-971 (AYCHIKGF) the chain is on the extracellular side.

The protein belongs to the Ca(2+):cation antiporter (CaCA) (TC 2.A.19) family. SLC8 subfamily. In terms of tissue distribution, detected in heart, brain cortex and hippocampus (at protein level). Cardiac sarcolemma or brain, and spleen. Expressed in all regions of the kidney, highest levels of expression in the distal convoluted tubule. Expressed throughout the CNS, in decreasing order of abundance in hippocampus, cortex, cerebellum, hypothalamus, midbrain and striatum. Expressed in numerous regions of the brain including multiple cortical layers, hippocampus, septal nuclei, thalamic nuclei, cerebellum, hypothalamus, olfactory bulb and brainstem. Also expressed in various regions of the spinal cord, ventricles and atria of the heart, lung, adrenals and kidney. Isoform 4 seems to be a predominant isoform in aorta, stomach, liver, and kidney.

The protein resides in the cell membrane. It localises to the cell projection. The protein localises to the dendrite. The catalysed reaction is Ca(2+)(in) + 3 Na(+)(out) = Ca(2+)(out) + 3 Na(+)(in). Its activity is regulated as follows. Activated by micromolar levels of Ca(2+). Only active at low calcium concentrations. Not activated by PKC. With respect to regulation, active at all calcium levels tested. Activated by PKC. Its activity is regulated as follows. Only active at low calcium concentrations. Activated by PKC. In terms of biological role, mediates the exchange of one Ca(2+) ion against three to four Na(+) ions across the cell membrane, and thereby contributes to the regulation of cytoplasmic Ca(2+) levels and Ca(2+)-dependent cellular processes. Contributes to Ca(2+) transport during excitation-contraction coupling in muscle. In a first phase, voltage-gated channels mediate the rapid increase of cytoplasmic Ca(2+) levels due to release of Ca(2+) stores from the endoplasmic reticulum. SLC8A1 mediates the export of Ca(2+) from the cell during the next phase, so that cytoplasmic Ca(2+) levels rapidly return to baseline. Required for normal embryonic heart development and the onset of heart contractions. This chain is Sodium/calcium exchanger 1 (Slc8a1), found in Rattus norvegicus (Rat).